The following is a 113-amino-acid chain: GFPVPDPFIWDASFKTFYDDLDNQHKQLFQAILTQGNVGGATAGDNAYACLVAHFLFEEAAMQVAKYGGYGAHKAAHEEFLGKVKGGSADAAYCKDWLTQHIKTIDFKYKGKL.

Fe cation contacts are provided by His-25, His-54, Glu-58, His-73, His-77, His-101, and Asp-106.

The protein belongs to the hemerythrin family. As to quaternary structure, homotrimer.

Its function is as follows. Hemerythrin is a respiratory protein in blood cells of certain marine worms. The oxygen-binding site in each chain contains two iron atoms. The sequence is that of Hemerythrin from Siphonosoma cumanense (Sipunculan worm).